The following is a 74-amino-acid chain: Defensin-like protein 39 (74 aa).

Residues 1–28 (MEKKSLAALSFLLLLVLFVAQEIVVTEA) form the signal peptide. 4 disulfide bridges follow: Cys-31–Cys-74, Cys-42–Cys-63, Cys-48–Cys-68, and Cys-52–Cys-70.

The protein belongs to the DEFL family. In terms of tissue distribution, pods.

It localises to the secreted. Possesses antifungal activity. The polypeptide is Defensin-like protein 39 (PI39) (Pisum sativum (Garden pea)).